The following is a 426-amino-acid chain: D-tagatose-1,6-bisphosphate aldolase subunit KbaZ (426 aa).

The protein belongs to the GatZ/KbaZ family. KbaZ subfamily. Forms a complex with KbaY.

It functions in the pathway carbohydrate metabolism; D-tagatose 6-phosphate degradation; D-glyceraldehyde 3-phosphate and glycerone phosphate from D-tagatose 6-phosphate: step 2/2. In terms of biological role, component of the tagatose-1,6-bisphosphate aldolase KbaYZ that is required for full activity and stability of the Y subunit. Could have a chaperone-like function for the proper and stable folding of KbaY. When expressed alone, KbaZ does not show any aldolase activity. This Escherichia coli O127:H6 (strain E2348/69 / EPEC) protein is D-tagatose-1,6-bisphosphate aldolase subunit KbaZ.